A 623-amino-acid polypeptide reads, in one-letter code: Xaa-Pro aminopeptidase 1 (623 aa).

A peptide is bound at residue R77. The residue at position 304 (K304) is an N6-acetyllysine. H395 is a binding site for a peptide. D415, D426, and H489 together coordinate Mn(2+). A peptide-binding residues include H489, H498, and E523. The Mn(2+) site is built by E523 and E537.

This sequence belongs to the peptidase M24B family. As to quaternary structure, homodimer. The cofactor is Mn(2+). In terms of tissue distribution, expressed in all tissues tested, including liver, adrenal decapsular tissue, adrenal capsular tissue, corpus luteum, testis, submandibular gland, thymus, brain, cerebellum and heart. Highest levels in testis.

The protein localises to the cytoplasm. The catalysed reaction is Release of any N-terminal amino acid, including proline, that is linked to proline, even from a dipeptide or tripeptide.. Its activity is regulated as follows. Inhibited by inositol hexakisphosphate. Its function is as follows. Metalloaminopeptidase that catalyzes the removal of a penultimate prolyl residue from the N-termini of peptides, such as Arg-Pro-Pro. Contributes to the degradation of bradykinin. This chain is Xaa-Pro aminopeptidase 1, found in Rattus norvegicus (Rat).